A 31-amino-acid polypeptide reads, in one-letter code: Photosystem I reaction center subunit XII (31 aa).

A helical membrane pass occupies residues 7–26 (QVFLALIIALIPGILADRLG).

Belongs to the PsaM family.

The protein localises to the plastid. It localises to the chloroplast thylakoid membrane. This is Photosystem I reaction center subunit XII from Euglena deses.